The primary structure comprises 95 residues: uncharacterized protein (95 aa).

The first 17 residues, 1 to 17, serve as a signal peptide directing secretion; the sequence is MTSSLVIYIFLWSRLIC.

This is an uncharacterized protein from Saccharomyces cerevisiae (strain ATCC 204508 / S288c) (Baker's yeast).